A 472-amino-acid chain; its full sequence is Glutamate--tRNA ligase 2 (472 aa).

Residues Pro10 to Gly20 carry the 'HIGH' region motif. Cys99, Cys101, Cys126, and Asp128 together coordinate Zn(2+). The span at Glu112–Asp130 shows a compositional bias: basic and acidic residues. The segment at Glu112–Val137 is disordered. The 'KMSKS' region signature appears at Arg240 to Arg244. Lys243 is an ATP binding site.

Belongs to the class-I aminoacyl-tRNA synthetase family. Glutamate--tRNA ligase type 1 subfamily. In terms of assembly, monomer. Requires Zn(2+) as cofactor.

The protein resides in the cytoplasm. It carries out the reaction tRNA(Glu) + L-glutamate + ATP = L-glutamyl-tRNA(Glu) + AMP + diphosphate. In terms of biological role, catalyzes the attachment of glutamate to tRNA(Glu) in a two-step reaction: glutamate is first activated by ATP to form Glu-AMP and then transferred to the acceptor end of tRNA(Glu). The sequence is that of Glutamate--tRNA ligase 2 from Halorhodospira halophila (strain DSM 244 / SL1) (Ectothiorhodospira halophila (strain DSM 244 / SL1)).